Here is a 178-residue protein sequence, read N- to C-terminus: Large ribosomal subunit protein bL25 (178 aa).

The protein belongs to the bacterial ribosomal protein bL25 family. CTC subfamily. As to quaternary structure, part of the 50S ribosomal subunit; part of the 5S rRNA/L5/L18/L25 subcomplex. Contacts the 5S rRNA. Binds to the 5S rRNA independently of L5 and L18.

Functionally, this is one of the proteins that binds to the 5S RNA in the ribosome where it forms part of the central protuberance. The chain is Large ribosomal subunit protein bL25 from Helicobacter pylori (strain J99 / ATCC 700824) (Campylobacter pylori J99).